We begin with the raw amino-acid sequence, 70 residues long: uncharacterized protein (70 aa).

This is an uncharacterized protein from Swinepox virus (strain Kasza) (SWPV).